Reading from the N-terminus, the 287-residue chain is ATP synthase gamma chain (287 aa).

Belongs to the ATPase gamma chain family. In terms of assembly, F-type ATPases have 2 components, CF(1) - the catalytic core - and CF(0) - the membrane proton channel. CF(1) has five subunits: alpha(3), beta(3), gamma(1), delta(1), epsilon(1). CF(0) has three main subunits: a, b and c.

It localises to the cell membrane. Its function is as follows. Produces ATP from ADP in the presence of a proton gradient across the membrane. The gamma chain is believed to be important in regulating ATPase activity and the flow of protons through the CF(0) complex. In Brevibacillus brevis (strain 47 / JCM 6285 / NBRC 100599), this protein is ATP synthase gamma chain.